The chain runs to 274 residues: 4-hydroxy-3-methylbut-2-enyl diphosphate reductase (274 aa).

Residue cysteine 12 coordinates [4Fe-4S] cluster. Positions 36 and 70 each coordinate (2E)-4-hydroxy-3-methylbut-2-enyl diphosphate. Dimethylallyl diphosphate is bound by residues histidine 36 and histidine 70. Isopentenyl diphosphate contacts are provided by histidine 36 and histidine 70. Cysteine 92 is a [4Fe-4S] cluster binding site. Histidine 120 is a (2E)-4-hydroxy-3-methylbut-2-enyl diphosphate binding site. A dimethylallyl diphosphate-binding site is contributed by histidine 120. Histidine 120 lines the isopentenyl diphosphate pocket. The Proton donor role is filled by glutamate 122. Threonine 158 lines the (2E)-4-hydroxy-3-methylbut-2-enyl diphosphate pocket. Cysteine 186 serves as a coordination point for [4Fe-4S] cluster. (2E)-4-hydroxy-3-methylbut-2-enyl diphosphate is bound by residues serine 214, serine 215, asparagine 216, and serine 258. The dimethylallyl diphosphate site is built by serine 214, serine 215, asparagine 216, and serine 258. 4 residues coordinate isopentenyl diphosphate: serine 214, serine 215, asparagine 216, and serine 258.

Belongs to the IspH family. The cofactor is [4Fe-4S] cluster.

The catalysed reaction is isopentenyl diphosphate + 2 oxidized [2Fe-2S]-[ferredoxin] + H2O = (2E)-4-hydroxy-3-methylbut-2-enyl diphosphate + 2 reduced [2Fe-2S]-[ferredoxin] + 2 H(+). It catalyses the reaction dimethylallyl diphosphate + 2 oxidized [2Fe-2S]-[ferredoxin] + H2O = (2E)-4-hydroxy-3-methylbut-2-enyl diphosphate + 2 reduced [2Fe-2S]-[ferredoxin] + 2 H(+). It participates in isoprenoid biosynthesis; dimethylallyl diphosphate biosynthesis; dimethylallyl diphosphate from (2E)-4-hydroxy-3-methylbutenyl diphosphate: step 1/1. The protein operates within isoprenoid biosynthesis; isopentenyl diphosphate biosynthesis via DXP pathway; isopentenyl diphosphate from 1-deoxy-D-xylulose 5-phosphate: step 6/6. Catalyzes the conversion of 1-hydroxy-2-methyl-2-(E)-butenyl 4-diphosphate (HMBPP) into a mixture of isopentenyl diphosphate (IPP) and dimethylallyl diphosphate (DMAPP). Acts in the terminal step of the DOXP/MEP pathway for isoprenoid precursor biosynthesis. This chain is 4-hydroxy-3-methylbut-2-enyl diphosphate reductase, found in Helicobacter pylori (strain Shi470).